Reading from the N-terminus, the 59-residue chain is Potassium channel toxin alpha-KTx 16.4 (59 aa).

The N-terminal stretch at methionine 1–alanine 22 is a signal peptide. Intrachain disulfides connect cysteine 30–cysteine 51, cysteine 36–cysteine 56, and cysteine 40–cysteine 58.

The protein belongs to the short scorpion toxin superfamily. Potassium channel inhibitor family. Alpha-KTx 16 subfamily. Expressed by the venom gland.

It is found in the secreted. In terms of biological role, weak inhibitor of voltage-gated potassium channel hKv1.3/KCNA3. This is Potassium channel toxin alpha-KTx 16.4 from Mesobuthus eupeus (Lesser Asian scorpion).